The following is a 212-amino-acid chain: Probable nicotinate-nucleotide adenylyltransferase (212 aa).

Belongs to the NadD family.

The catalysed reaction is nicotinate beta-D-ribonucleotide + ATP + H(+) = deamido-NAD(+) + diphosphate. The protein operates within cofactor biosynthesis; NAD(+) biosynthesis; deamido-NAD(+) from nicotinate D-ribonucleotide: step 1/1. Catalyzes the reversible adenylation of nicotinate mononucleotide (NaMN) to nicotinic acid adenine dinucleotide (NaAD). This Shewanella sp. (strain MR-7) protein is Probable nicotinate-nucleotide adenylyltransferase.